Reading from the N-terminus, the 543-residue chain is MAKELKFSEDARSAMLRGVDKLADTVKTTIGPKGRNVVLEQSYGSPTITNDGVTIAKSIELEDHFENMGAKLVSEVASKTNDIAGDGTTTATVLTQAIVTEGMKNVTAGANPVGIRRGIEKATAAAVEGLKKMSHDVKTKDDIAQIASISAANKEVGKLIADAMEKVGNDGVITIEDSRGVDTSVDVVEGMSFDRGYMSQYMVTDNDKMEANLDNPYVLITDKKISNIQDILPLLQSVVQEGRALLIIADDITGEALPTLVLNKIRGTFNVVAVKAPGFGDRRKAQLEDIAVLTGGTVISDDLGMQLKDATIDQLGSANKVTITKDATTIVDGSGNKEAIAERVDQIKKAIAETTSDFDKEKLQERLAKLAGGVAVVKVGAATETELKEKKYRIEDALNATRAAVQEGFVPGGGTALVNVIPALDEVEASATGDEATGIKIVKAALEAPVRQIAENAGLEGSVIVNQLKQEKPGVGYNAADDKFEDMVAAGIVDPTKVTRSALQNAASVSALLLTTEAVVADKPQPADAAPQAPVAGGMGGMM.

ATP contacts are provided by residues Thr29–Pro32, Asp86–Thr90, Gly413, Asn478–Ala480, and Asp494.

This sequence belongs to the chaperonin (HSP60) family. Forms a cylinder of 14 subunits composed of two heptameric rings stacked back-to-back. Interacts with the co-chaperonin GroES.

It localises to the cytoplasm. The enzyme catalyses ATP + H2O + a folded polypeptide = ADP + phosphate + an unfolded polypeptide.. Together with its co-chaperonin GroES, plays an essential role in assisting protein folding. The GroEL-GroES system forms a nano-cage that allows encapsulation of the non-native substrate proteins and provides a physical environment optimized to promote and accelerate protein folding. The polypeptide is Chaperonin GroEL (Limosilactobacillus fermentum (strain NBRC 3956 / LMG 18251) (Lactobacillus fermentum)).